The chain runs to 467 residues: Siroheme synthase 2 (467 aa).

Residues 1-204 (MDYLPIFCQL…NDVALAERQI (204 aa)) form a precorrin-2 dehydrogenase /sirohydrochlorin ferrochelatase region. NAD(+) is bound by residues 22–23 (EI) and 43–44 (CS). Serine 128 is modified (phosphoserine). The interval 216–467 (GEVVLVGAGP…EPSQPLAQMA (252 aa)) is uroporphyrinogen-III C-methyltransferase. An S-adenosyl-L-methionine-binding site is contributed by proline 225. The active-site Proton acceptor is the aspartate 248. Catalysis depends on lysine 270, which acts as the Proton donor. S-adenosyl-L-methionine contacts are provided by residues 301–303 (GGD), isoleucine 306, 331–332 (TA), methionine 382, and glycine 411.

In the N-terminal section; belongs to the precorrin-2 dehydrogenase / sirohydrochlorin ferrochelatase family. This sequence in the C-terminal section; belongs to the precorrin methyltransferase family.

It catalyses the reaction uroporphyrinogen III + 2 S-adenosyl-L-methionine = precorrin-2 + 2 S-adenosyl-L-homocysteine + H(+). The catalysed reaction is precorrin-2 + NAD(+) = sirohydrochlorin + NADH + 2 H(+). The enzyme catalyses siroheme + 2 H(+) = sirohydrochlorin + Fe(2+). It participates in cofactor biosynthesis; adenosylcobalamin biosynthesis; precorrin-2 from uroporphyrinogen III: step 1/1. It functions in the pathway cofactor biosynthesis; adenosylcobalamin biosynthesis; sirohydrochlorin from precorrin-2: step 1/1. Its pathway is porphyrin-containing compound metabolism; siroheme biosynthesis; precorrin-2 from uroporphyrinogen III: step 1/1. The protein operates within porphyrin-containing compound metabolism; siroheme biosynthesis; siroheme from sirohydrochlorin: step 1/1. It participates in porphyrin-containing compound metabolism; siroheme biosynthesis; sirohydrochlorin from precorrin-2: step 1/1. Functionally, multifunctional enzyme that catalyzes the SAM-dependent methylations of uroporphyrinogen III at position C-2 and C-7 to form precorrin-2 via precorrin-1. Then it catalyzes the NAD-dependent ring dehydrogenation of precorrin-2 to yield sirohydrochlorin. Finally, it catalyzes the ferrochelation of sirohydrochlorin to yield siroheme. The polypeptide is Siroheme synthase 2 (Serratia proteamaculans (strain 568)).